We begin with the raw amino-acid sequence, 480 residues long: Protein nucleotidyltransferase YdiU (480 aa).

The ATP site is built by Gly-86, Gly-88, Arg-89, Lys-109, Asp-121, Gly-122, Arg-172, and Arg-179. Residue Asp-248 is the Proton acceptor of the active site. 2 residues coordinate Mg(2+): Asn-249 and Asp-258. Residue Asp-258 coordinates ATP.

It belongs to the SELO family. The cofactor is Mg(2+). Mn(2+) serves as cofactor.

The catalysed reaction is L-seryl-[protein] + ATP = 3-O-(5'-adenylyl)-L-seryl-[protein] + diphosphate. The enzyme catalyses L-threonyl-[protein] + ATP = 3-O-(5'-adenylyl)-L-threonyl-[protein] + diphosphate. It catalyses the reaction L-tyrosyl-[protein] + ATP = O-(5'-adenylyl)-L-tyrosyl-[protein] + diphosphate. It carries out the reaction L-histidyl-[protein] + UTP = N(tele)-(5'-uridylyl)-L-histidyl-[protein] + diphosphate. The catalysed reaction is L-seryl-[protein] + UTP = O-(5'-uridylyl)-L-seryl-[protein] + diphosphate. The enzyme catalyses L-tyrosyl-[protein] + UTP = O-(5'-uridylyl)-L-tyrosyl-[protein] + diphosphate. Its function is as follows. Nucleotidyltransferase involved in the post-translational modification of proteins. It can catalyze the addition of adenosine monophosphate (AMP) or uridine monophosphate (UMP) to a protein, resulting in modifications known as AMPylation and UMPylation. This is Protein nucleotidyltransferase YdiU from Salmonella agona (strain SL483).